The primary structure comprises 508 residues: POTE ankyrin domain family member G (508 aa).

5 ANK repeats span residues 172–201 (QKRT…QLNI), 205–234 (KKRT…DPNI), 238–267 (YGNT…DIES), 271–300 (HGLT…NLNA), and 304–333 (YGRT…DVSS). Positions 367-376 (KVSSENSNPE) are enriched in polar residues. A disordered region spans residues 367-488 (KVSSENSNPE…QLSEEQNTGI (122 aa)). 2 stretches are compositionally biased toward basic and acidic residues: residues 377–392 (QDLK…RLKG) and 406–421 (EINK…EMKK). Over residues 476 to 488 (TQKQLSEEQNTGI) the composition is skewed to polar residues.

This sequence belongs to the POTE family.

This chain is POTE ankyrin domain family member G (POTEG), found in Homo sapiens (Human).